A 192-amino-acid chain; its full sequence is Xanthine phosphoribosyltransferase (192 aa).

Xanthine is bound by residues Leu-20 and Asn-27. Residue 128-132 (ANGQA) coordinates 5-phospho-alpha-D-ribose 1-diphosphate. Lys-156 contributes to the xanthine binding site.

It belongs to the purine/pyrimidine phosphoribosyltransferase family. Xpt subfamily. In terms of assembly, homodimer.

The protein resides in the cytoplasm. It carries out the reaction XMP + diphosphate = xanthine + 5-phospho-alpha-D-ribose 1-diphosphate. It participates in purine metabolism; XMP biosynthesis via salvage pathway; XMP from xanthine: step 1/1. In terms of biological role, converts the preformed base xanthine, a product of nucleic acid breakdown, to xanthosine 5'-monophosphate (XMP), so it can be reused for RNA or DNA synthesis. The protein is Xanthine phosphoribosyltransferase of Listeria innocua serovar 6a (strain ATCC BAA-680 / CLIP 11262).